A 116-amino-acid polypeptide reads, in one-letter code: SGSCSLKTCWMQLSPFREVGNRLKQKYDQAAAVRLARRRRLEPVNQRFSPPTKMDLVYLETSPDYCMRNDTTGAAGTAGRQCERGSAGTGGCELMCCGRGYDSFRATSTERCHCKF.

Serine 1 is lipidated: O-palmitoleoyl serine; by PORCN. N-linked (GlcNAc...) asparagine glycosylation occurs at asparagine 69. A disulfide bridge connects residues cysteine 82 and cysteine 97.

It belongs to the Wnt family. Post-translationally, palmitoleoylation is required for efficient binding to frizzled receptors. Depalmitoleoylation leads to Wnt signaling pathway inhibition.

It localises to the secreted. The protein resides in the extracellular space. It is found in the extracellular matrix. Its function is as follows. Ligand for members of the frizzled family of seven transmembrane receptors. Probable developmental protein. May be a signaling molecule which affects the development of discrete regions of tissues. Is likely to signal over only few cell diameters. The protein is Protein Wnt-5(I) (WNT-5(I)) of Eptatretus stoutii (Pacific hagfish).